A 495-amino-acid polypeptide reads, in one-letter code: uncharacterized protein (495 aa).

The FAD site is built by Ser16, Glu36, Trp45, Asp56, Tyr62, and Val105.

This sequence belongs to the FAD-binding monooxygenase family. FAD serves as cofactor.

This is an uncharacterized protein from Mycobacterium tuberculosis (strain CDC 1551 / Oshkosh).